We begin with the raw amino-acid sequence, 386 residues long: UDP-N-acetylbacillosamine transaminase (386 aa).

Substrate is bound by residues Asn25–Ala28, Ala56, and Ser179. At Lys184 the chain carries N6-(pyridoxal phosphate)lysine. Substrate-binding positions include Asn227 and Gln325–Thr328.

Belongs to the DegT/DnrJ/EryC1 family. Pyridoxal 5'-phosphate serves as cofactor.

The enzyme catalyses UDP-N-acetylbacillosamine + 2-oxoglutarate = UDP-2-acetamido-2,6-dideoxy-alpha-D-xylo-hex-4-ulose + L-glutamate. The protein operates within protein modification; protein glycosylation. In terms of biological role, aminotransferase involved in the bacillosamine biosynthesis pathway by producing UDP-4-amino-4,6-dideoxy-alpha-D-GlcNAc (UDP-2-acetamido-4-amino-2,4,6-trideoxy-alpha-D-glucopyranose), a precursor used in the production of the glycan component 2,4-diacetamido-2,4,6-trideoxy-alpha-D-glucopyranose. Required for host colonization and virulence. Involved in the N-linked protein glycosylation pathway. This is UDP-N-acetylbacillosamine transaminase (pglE) from Campylobacter jejuni subsp. jejuni serotype O:2 (strain ATCC 700819 / NCTC 11168).